We begin with the raw amino-acid sequence, 442 residues long: Glutamate--tRNA ligase 1 (442 aa).

Residues 9 to 19 (PSPTGKLHVGN) carry the 'HIGH' region motif. The 'KMSKS' region motif lies at 240–244 (KLSKR). Lysine 243 lines the ATP pocket.

It belongs to the class-I aminoacyl-tRNA synthetase family. Glutamate--tRNA ligase type 1 subfamily. As to quaternary structure, monomer.

It is found in the cytoplasm. The enzyme catalyses tRNA(Glu) + L-glutamate + ATP = L-glutamyl-tRNA(Glu) + AMP + diphosphate. Catalyzes the attachment of glutamate to tRNA(Glu) in a two-step reaction: glutamate is first activated by ATP to form Glu-AMP and then transferred to the acceptor end of tRNA(Glu). This Novosphingobium aromaticivorans (strain ATCC 700278 / DSM 12444 / CCUG 56034 / CIP 105152 / NBRC 16084 / F199) protein is Glutamate--tRNA ligase 1.